Consider the following 428-residue polypeptide: Probable anion transporter 6 (428 aa).

An N-terminal signal peptide occupies residues 1 to 22 (MKFPKRYAIVLLTFMCTNVCYI). 11 helical membrane-spanning segments follow: residues 47–67 (MILS…GWAA), 74–94 (LVLL…PLDP), 98–118 (ILLV…FPSI), 137–157 (LTTS…PSLV), 164–184 (SVFS…FKFA), 221–241 (ILFS…HYAL), 269–289 (LPYL…DHLI), 301–321 (KLLN…LPLF), 327–347 (AIFC…GFAV), 356–376 (FAGI…IVGV), and 401–421 (TVFF…LIFS).

This sequence belongs to the major facilitator superfamily. Sodium/anion cotransporter (TC 2.A.1.14) family.

The protein localises to the cell membrane. Functionally, probable anion transporter. In Oryza sativa subsp. japonica (Rice), this protein is Probable anion transporter 6 (PHT4;6).